Here is a 234-residue protein sequence, read N- to C-terminus: Glutathione S-transferase U11 (234 aa).

The GST N-terminal domain occupies 11-90 (EYVKLLGAWP…YVDETWLSGP (80 aa)). Residues 21-22 (SP), 47-48 (LS), 61-62 (QI), and 74-75 (ES) each bind glutathione. Residues 96–228 (DPFDRAVARF…KLVQFARLKF (133 aa)) form the GST C-terminal domain.

Belongs to the GST superfamily. Tau family.

The protein localises to the cytoplasm. It localises to the cytosol. It carries out the reaction RX + glutathione = an S-substituted glutathione + a halide anion + H(+). May be involved in the conjugation of reduced glutathione to a wide number of exogenous and endogenous hydrophobic electrophiles and have a detoxification role against certain herbicides. The protein is Glutathione S-transferase U11 (GSTU11) of Arabidopsis thaliana (Mouse-ear cress).